The chain runs to 566 residues: Serine/threonine-protein kinase PknE (566 aa).

Residues Met-1–Trp-337 lie on the Cytoplasmic side of the membrane. Phosphoserine; by autocatalysis is present on Ser-7. The residue at position 11 (Thr-11) is a Phosphothreonine; by autocatalysis. The Protein kinase domain occupies Tyr-16 to Leu-275. ATP contacts are provided by residues Val-22–Val-30 and Lys-45. 2 positions are modified to phosphothreonine; by autocatalysis: Thr-50 and Thr-59. The active-site Proton acceptor is Asp-139. Phosphothreonine; by autocatalysis is present on residues Thr-170, Thr-175, and Thr-178. The disordered stretch occupies residues Pro-296–Pro-330. Residues Leu-338–Leu-358 traverse the membrane as a helical segment. Residues Ala-359–Gly-566 lie on the Extracellular side of the membrane.

This sequence belongs to the protein kinase superfamily. Ser/Thr protein kinase family. Autophosphorylated on serine and threonine residues. Dephosphorylated by PstP.

The protein localises to the cell membrane. It carries out the reaction L-seryl-[protein] + ATP = O-phospho-L-seryl-[protein] + ADP + H(+). The enzyme catalyses L-threonyl-[protein] + ATP = O-phospho-L-threonyl-[protein] + ADP + H(+). The sequence is that of Serine/threonine-protein kinase PknE (pknE) from Mycobacterium bovis (strain ATCC BAA-935 / AF2122/97).